A 596-amino-acid polypeptide reads, in one-letter code: Fumarate reductase (cytochrome) (596 aa).

The first 25 residues, 1 to 25 (MKKMNLAVCIATLMGTAGLMGTAVA), serve as a signal peptide directing secretion. Heme c-binding residues include His-33, Cys-39, Cys-42, His-43, Cys-61, Cys-64, His-65, His-83, His-86, Cys-93, Cys-96, His-97, Ala-99, His-100, Cys-107, Cys-110, and His-111. The tract at residues 143–596 (ALASAPHDTV…EEAAKYSKKN (454 aa)) is flavoprotein-like. The FAD site is built by Ala-162, Glu-181, Asn-189, Ala-194, Gly-195, Gly-196, Gly-303, and Asp-369. Gly-195 is a fumarate binding site. Residue Gly-195 coordinates succinate. Tyr-386 provides a ligand contact to heme c. Residues His-390, Thr-402, and Glu-403 each contribute to the succinate site. 2 residues coordinate fumarate: Thr-402 and Glu-403. The active-site Proton donor is Arg-427. Fumarate is bound at residue His-529. His-529 lines the succinate pocket. Positions 530 and 559 each coordinate FAD. 2 residues coordinate fumarate: Arg-569 and Gly-572. Succinate-binding residues include Arg-569 and Gly-572. 2 residues coordinate FAD: Ala-574 and Ile-575.

In the C-terminal section; belongs to the FAD-dependent oxidoreductase 2 family. FRD/SDH subfamily. In terms of assembly, monomer. It depends on FAD as a cofactor. Requires heme c as cofactor.

It is found in the periplasm. It catalyses the reaction 2 Fe(III)-[cytochrome c] + succinate = fumarate + 2 Fe(II)-[cytochrome c] + 2 H(+). With respect to regulation, mesaconic acid is a competitive inhibitor of fumarate reduction. In terms of biological role, flavocytochrome that catalyzes the reduction of fumarate to succinate. Is essential for fumarate respiration during anaerobic growth, acting as the terminal reductase. Receives electrons from the membrane-bound tetraheme c-type cytochrome CymA. Is essentially unidirectional, catalyzing only fumarate reduction. Cannot reduce nitrite, dimethylsulphoxide, trimethylamine-N-oxide (TMAO) or sulfite. In vitro, can use the artificial electron donor methyl viologen. The sequence is that of Fumarate reductase (cytochrome) from Shewanella frigidimarina (strain NCIMB 400).